Here is a 280-residue protein sequence, read N- to C-terminus: Diaminopimelate epimerase (280 aa).

2 residues coordinate substrate: Asn13 and Asn66. Residue Cys75 is the Proton donor of the active site. Residues Gly76–Asn77, Asn162, Asn195, and Glu213–Arg214 each bind substrate. Residue Cys222 is the Proton acceptor of the active site. Substrate is bound at residue Gly223–Thr224.

This sequence belongs to the diaminopimelate epimerase family. In terms of assembly, homodimer.

The protein resides in the cytoplasm. The catalysed reaction is (2S,6S)-2,6-diaminopimelate = meso-2,6-diaminopimelate. It functions in the pathway amino-acid biosynthesis; L-lysine biosynthesis via DAP pathway; DL-2,6-diaminopimelate from LL-2,6-diaminopimelate: step 1/1. Functionally, catalyzes the stereoinversion of LL-2,6-diaminopimelate (L,L-DAP) to meso-diaminopimelate (meso-DAP), a precursor of L-lysine and an essential component of the bacterial peptidoglycan. This is Diaminopimelate epimerase from Synechococcus elongatus (strain ATCC 33912 / PCC 7942 / FACHB-805) (Anacystis nidulans R2).